The chain runs to 277 residues: Photosystem I assembly factor PSA3, chloroplastic (277 aa).

A chloroplast-targeting transit peptide spans 1–45 (MVVVTHISTSFHQISPSFFHLRLRNPSTTSSSRPKLDGGFALSIR).

As to quaternary structure, interacts with PYG7.

Its subcellular location is the plastid. The protein resides in the chloroplast. It is found in the chloroplast thylakoid membrane. In terms of biological role, nuclear genome-encoded factor required for the accumulation of photosystem I (PSI). Functions as a PSI biogenesis factor. Cooperates with PYG7 to promote the stable assembly of PSI in the thylakoid membrane. May target primarily the PsaC subunit. Does not seem to be required for the expression of chloroplast genes encoding PSI subunits. The sequence is that of Photosystem I assembly factor PSA3, chloroplastic from Arabidopsis thaliana (Mouse-ear cress).